The primary structure comprises 463 residues: Fumarate hydratase class II (463 aa).

Substrate-binding positions include 98–100, 129–132, 139–141, and Thr-187; these read SGT, HPND, and SSN. The active-site Proton donor/acceptor is the His-188. Residue Ser-318 is part of the active site. Substrate-binding positions include Ser-319 and 324–326; that span reads KVN.

The protein belongs to the class-II fumarase/aspartase family. Fumarase subfamily. As to quaternary structure, homotetramer.

Its subcellular location is the cytoplasm. The catalysed reaction is (S)-malate = fumarate + H2O. The protein operates within carbohydrate metabolism; tricarboxylic acid cycle; (S)-malate from fumarate: step 1/1. In terms of biological role, involved in the TCA cycle. Catalyzes the stereospecific interconversion of fumarate to L-malate. The protein is Fumarate hydratase class II of Rhizobium meliloti (strain 1021) (Ensifer meliloti).